Reading from the N-terminus, the 110-residue chain is Putative pterin-4-alpha-carbinolamine dehydratase (110 aa).

The protein belongs to the pterin-4-alpha-carbinolamine dehydratase family.

It carries out the reaction (4aS,6R)-4a-hydroxy-L-erythro-5,6,7,8-tetrahydrobiopterin = (6R)-L-erythro-6,7-dihydrobiopterin + H2O. The chain is Putative pterin-4-alpha-carbinolamine dehydratase from Vibrio vulnificus (strain CMCP6).